Consider the following 108-residue polypeptide: UPF0060 membrane protein RHOS4_03690 (108 aa).

The next 4 membrane-spanning stretches (helical) occupy residues 5-25 (LAAY…VWAW), 32-52 (ALWL…LALT), 62-82 (AVYG…VEGV), and 86-106 (RWDM…LWAP).

The protein belongs to the UPF0060 family.

The protein localises to the cell inner membrane. The sequence is that of UPF0060 membrane protein RHOS4_03690 from Cereibacter sphaeroides (strain ATCC 17023 / DSM 158 / JCM 6121 / CCUG 31486 / LMG 2827 / NBRC 12203 / NCIMB 8253 / ATH 2.4.1.) (Rhodobacter sphaeroides).